Reading from the N-terminus, the 99-residue chain is MVRTMPGALYPRAGLSLFLLYLVLAAVLLRPQPLRPQRSVPEEFSAPLELSQPLSGLVDDYGVRPKHPWPRGPRPLLSRAQQRKRDGPDMAEYYYNAHL.

A helical membrane pass occupies residues 7–29 (GALYPRAGLSLFLLYLVLAAVLL). Positions 65–88 (PKHPWPRGPRPLLSRAQQRKRDGP) are disordered.

Interacts with SPPL2C (via active sites); the interaction stabilizes FREY1 protein and inhibits SPPL2C proteolytic activity. Interacts with IZUMO1; the interaction retains IZUMO1 at the endoplasmic reticulum membrane and coordinates IZUMO1 complex assembly.

The protein localises to the endoplasmic reticulum membrane. Functionally, key regulator for male fertility expressed transiently in round spermatids where it recruits IZUMO1 at the endoplasmic reticulum (ER) membrane and coordinates the oolemmal binding multimeric complex (IZUMO1 complex) assembly. Upon complete assembly of the IZUMO1 complex, its ER retention is released, facilitating IZUMO1 complex export to the acrosome. Through the interaction with SPPL2C, inhibits its intramembrane protease activity directly accessing the catalytic center of an I-CLiP. This Ailuropoda melanoleuca (Giant panda) protein is Protein Frey.